Here is a 364-residue protein sequence, read N- to C-terminus: UDP-N-acetylglucosamine--N-acetylmuramyl-(pentapeptide) pyrophosphoryl-undecaprenol N-acetylglucosamine transferase 1 (364 aa).

UDP-N-acetyl-alpha-D-glucosamine is bound by residues 10 to 12, Asn124, Ser195, Ile250, and Gln295; that span reads TGG.

Belongs to the glycosyltransferase 28 family. MurG subfamily.

The protein localises to the cell membrane. It carries out the reaction di-trans,octa-cis-undecaprenyl diphospho-N-acetyl-alpha-D-muramoyl-L-alanyl-D-glutamyl-meso-2,6-diaminopimeloyl-D-alanyl-D-alanine + UDP-N-acetyl-alpha-D-glucosamine = di-trans,octa-cis-undecaprenyl diphospho-[N-acetyl-alpha-D-glucosaminyl-(1-&gt;4)]-N-acetyl-alpha-D-muramoyl-L-alanyl-D-glutamyl-meso-2,6-diaminopimeloyl-D-alanyl-D-alanine + UDP + H(+). Its pathway is cell wall biogenesis; peptidoglycan biosynthesis. Its function is as follows. Cell wall formation. Catalyzes the transfer of a GlcNAc subunit on undecaprenyl-pyrophosphoryl-MurNAc-pentapeptide (lipid intermediate I) to form undecaprenyl-pyrophosphoryl-MurNAc-(pentapeptide)GlcNAc (lipid intermediate II). This is UDP-N-acetylglucosamine--N-acetylmuramyl-(pentapeptide) pyrophosphoryl-undecaprenol N-acetylglucosamine transferase 1 from Bacillus anthracis.